A 417-amino-acid chain; its full sequence is MAEYKNYTLNFGPVHPAAHGVLRLILELDGENVVRADPHVGLLHRGTEKLAEFKPYNQSIGYMDRLDYVSMMCNEHAYVMAIEKLLQLEVPERAKYIRVMFAEMTRILNHLLWVAACGIDLGAMTVFLYAFRVREDLFDCYEAVSGARMHAAYFRPGGVARDLPTQMPQYQKTRFTSKRKAKKLNEPRQGSMLDFLDHFVVDFEKSLDEIDTLLTDNRLWKQRTVDIGTVTAERAKELGFTGPMLRGSGVAWDLRKTQPYEVYHKLEFDIPIGANGDCYDRYLVRMAEMRESNKLIKQCVDWLRANPGSVLSDNHKVAPPKRNAMKNNMEELIHHFKLFSEGYCTTEGEVYVGTEHPKGEFGVYIKSDGANKPYRLKMRAPGFAHISAMDELLSGHMLADTPAIISTIDVVFGDVDR.

Belongs to the complex I 49 kDa subunit family. NDH-1 is composed of 14 different subunits. Subunits NuoB, C, D, E, F, and G constitute the peripheral sector of the complex.

The protein localises to the cell inner membrane. The enzyme catalyses a quinone + NADH + 5 H(+)(in) = a quinol + NAD(+) + 4 H(+)(out). Its function is as follows. NDH-1 shuttles electrons from NADH, via FMN and iron-sulfur (Fe-S) centers, to quinones in the respiratory chain. The immediate electron acceptor for the enzyme in this species is believed to be ubiquinone. Couples the redox reaction to proton translocation (for every two electrons transferred, four hydrogen ions are translocated across the cytoplasmic membrane), and thus conserves the redox energy in a proton gradient. This chain is NADH-quinone oxidoreductase subunit D, found in Francisella tularensis subsp. holarctica (strain FTNF002-00 / FTA).